The primary structure comprises 349 residues: Dihydroorotase (349 aa).

Zn(2+)-binding residues include H17 and H19. Substrate is bound by residues 19–21 and N45; that span reads HLR. 3 residues coordinate Zn(2+): K103, H140, and H178. K103 is modified (N6-carboxylysine). H140 is a substrate binding site. L224 is a binding site for substrate. Position 252 (D252) interacts with Zn(2+). D252 is a catalytic residue. H256 and A268 together coordinate substrate.

It belongs to the metallo-dependent hydrolases superfamily. DHOase family. Class II DHOase subfamily. In terms of assembly, homodimer. It depends on Zn(2+) as a cofactor.

It catalyses the reaction (S)-dihydroorotate + H2O = N-carbamoyl-L-aspartate + H(+). The protein operates within pyrimidine metabolism; UMP biosynthesis via de novo pathway; (S)-dihydroorotate from bicarbonate: step 3/3. Catalyzes the reversible cyclization of carbamoyl aspartate to dihydroorotate. This is Dihydroorotase from Buchnera aphidicola subsp. Schizaphis graminum (strain Sg).